The chain runs to 319 residues: tRNA-cytidine(32) 2-sulfurtransferase (319 aa).

The PP-loop motif signature appears at 43-48 (SGGKDS). [4Fe-4S] cluster is bound by residues C118, C121, and C209.

Belongs to the TtcA family. Homodimer. Mg(2+) serves as cofactor. It depends on [4Fe-4S] cluster as a cofactor.

It localises to the cytoplasm. It catalyses the reaction cytidine(32) in tRNA + S-sulfanyl-L-cysteinyl-[cysteine desulfurase] + AH2 + ATP = 2-thiocytidine(32) in tRNA + L-cysteinyl-[cysteine desulfurase] + A + AMP + diphosphate + H(+). Its pathway is tRNA modification. Catalyzes the ATP-dependent 2-thiolation of cytidine in position 32 of tRNA, to form 2-thiocytidine (s(2)C32). The sulfur atoms are provided by the cysteine/cysteine desulfurase (IscS) system. This Neisseria meningitidis serogroup C / serotype 2a (strain ATCC 700532 / DSM 15464 / FAM18) protein is tRNA-cytidine(32) 2-sulfurtransferase.